Reading from the N-terminus, the 129-residue chain is Histone H2A.J (129 aa).

The tract at residues 1 to 22 is disordered; sequence MSGRGKQGGKVRAKAKSRSSRA. 2 positions are modified to N6-acetyllysine: Lys-6 and Lys-10. Basic residues predominate over residues 7–19; that stretch reads QGGKVRAKAKSRS. An N6-lactoyllysine; alternate modification is found at Lys-10. Gln-105 carries the post-translational modification N5-methylglutamine. Phosphothreonine; by DCAF1 is present on Thr-121.

This sequence belongs to the histone H2A family. The nucleosome is a histone octamer containing two molecules each of H2A, H2B, H3 and H4 assembled in one H3-H4 heterotetramer and two H2A-H2B heterodimers. The octamer wraps approximately 147 bp of DNA. Post-translationally, monoubiquitination of Lys-120 (H2AXK119ub) gives a specific tag for epigenetic transcriptional repression. Following DNA double-strand breaks (DSBs), it is ubiquitinated through 'Lys-63' linkage of ubiquitin moieties. In terms of processing, glutamine methylation at Gln-105 (H2AQ104me) by FBL is specifically dedicated to polymerase I. It is present at 35S ribosomal DNA locus and impairs binding of the FACT complex. Phosphorylation on Ser-2 (H2AS1ph) is enhanced during mitosis. Phosphorylation on Ser-2 by RPS6KA5/MSK1 directly represses transcription. Acetylation of H3 inhibits Ser-2 phosphorylation by RPS6KA5/MSK1. Phosphorylation at Thr-121 (H2AT120ph) by DCAF1 is present in the regulatory region of many tumor suppresor genes and down-regulates their transcription.

It localises to the nucleus. It is found in the chromosome. Functionally, core component of nucleosome. Nucleosomes wrap and compact DNA into chromatin, limiting DNA accessibility to the cellular machineries which require DNA as a template. Histones thereby play a central role in transcription regulation, DNA repair, DNA replication and chromosomal stability. DNA accessibility is regulated via a complex set of post-translational modifications of histones, also called histone code, and nucleosome remodeling. This Macaca fascicularis (Crab-eating macaque) protein is Histone H2A.J.